Reading from the N-terminus, the 319-residue chain is Solute carrier family 25 member 34 (319 aa).

Residues 1–22 (MNSAFSGPSSPTPGPSPPRPPL) are disordered. A compositionally biased stretch (pro residues) spans 10–22 (SPTPGPSPPRPPL). Solcar repeat units lie at residues 22 to 115 (LWPP…MQAA), 119 to 212 (DGPC…AKDW), and 222 to 313 (LSSL…LRQR). A run of 6 helical transmembrane segments spans residues 25–45 (PLDFGLGALACCGACVFTNPL), 63–83 (SYRRLYRGVLQALWVVGRTDG), 116–138 (GVTDGPCCSLIAGAAAGALGAFI), 188–209 (VNGAVPRVMVGSATQLATFSSA), 224–244 (SLNTLCAAVMSGVAVSIIMTP), and 296–319 (LAPHTTLSMLLWDVLRQRALPYTH).

Belongs to the mitochondrial carrier (TC 2.A.29) family.

It is found in the mitochondrion inner membrane. This is Solute carrier family 25 member 34 (slc25a34) from Danio rerio (Zebrafish).